The chain runs to 360 residues: Peptide chain release factor 1 (360 aa).

Q237 bears the N5-methylglutamine mark.

This sequence belongs to the prokaryotic/mitochondrial release factor family. Methylated by PrmC. Methylation increases the termination efficiency of RF1.

Its subcellular location is the cytoplasm. Its function is as follows. Peptide chain release factor 1 directs the termination of translation in response to the peptide chain termination codons UAG and UAA. This Nitrosococcus oceani (strain ATCC 19707 / BCRC 17464 / JCM 30415 / NCIMB 11848 / C-107) protein is Peptide chain release factor 1.